A 210-amino-acid polypeptide reads, in one-letter code: Probable GTP-binding protein EngB (210 aa).

One can recognise an EngB-type G domain in the interval 30 to 204; the sequence is QGYEVAFAGR…YRVLADWMEL (175 aa). GTP-binding positions include 38-45, 64-68, 82-85, 149-152, and 182-185; these read GRSNAGKS, GRTQL, DLPG, TKAD, and LFSA. Positions 45 and 66 each coordinate Mg(2+).

Belongs to the TRAFAC class TrmE-Era-EngA-EngB-Septin-like GTPase superfamily. EngB GTPase family. Mg(2+) serves as cofactor.

Functionally, necessary for normal cell division and for the maintenance of normal septation. This chain is Probable GTP-binding protein EngB, found in Pseudomonas putida (strain ATCC 47054 / DSM 6125 / CFBP 8728 / NCIMB 11950 / KT2440).